The following is a 257-amino-acid chain: Beta-fibrinogenase mucrofibrase-5 (257 aa).

A signal peptide spans 1–18 (MVLIRVLANLLILQLSYA). Residues 19 to 24 (QKSSEL) constitute a propeptide that is removed on maturation. Residues 25-248 (IIGGDECNIN…HLDWIKGIIA (224 aa)) form the Peptidase S1 domain. 6 cysteine pairs are disulfide-bonded: cysteine 31–cysteine 162, cysteine 49–cysteine 65, cysteine 97–cysteine 255, cysteine 141–cysteine 209, cysteine 173–cysteine 188, and cysteine 199–cysteine 224. Histidine 64 functions as the Charge relay system in the catalytic mechanism. Residue asparagine 102 is glycosylated (N-linked (GlcNAc...) asparagine). Aspartate 109 (charge relay system) is an active-site residue. The active-site Charge relay system is serine 203.

The protein belongs to the peptidase S1 family. Snake venom subfamily. As to quaternary structure, monomer. Expressed by the venom gland.

The protein localises to the secreted. Functionally, snake venom serine protease with strong beta-fibrinogenolytic activities, angiotensin I (AGT)-degrading activities and strong kallikrein-like activities in vitro, releasing bradykinin from kininogen (KNG1). Intravenous injection mildly lowers blood pressure in experimental rats, which may be explained by the action on angiotensin I and kininogen. Exhibits amidase activity against N-benzoyl-Pro-Phe-Arg-p-nitroanilide in vitro. The sequence is that of Beta-fibrinogenase mucrofibrase-5 from Protobothrops mucrosquamatus (Taiwan habu).